A 947-amino-acid chain; its full sequence is Bromodomain testis-specific protein (947 aa).

One can recognise a Bromo 1 domain in the interval 27–133 (RLTNQLQYLQ…KLFVQKLSQM (107 aa)). Ser187 bears the Phosphoserine mark. A Nuclear localization signal motif is present at residues 209-220 (KGVKRKADTTTP). In terms of domain architecture, Bromo 2 spans 267-376 (VKVTEQLRHC…DVFETHFSKI (110 aa)). Disordered stretches follow at residues 395-421 (ETTG…ERVQ), 444-512 (PFRK…PMNY), 610-690 (NNQL…VKKM), and 849-873 (HLEQ…GLTV). Positions 403–413 (NEASSEGNSSG) are enriched in low complexity. Residues 417 to 470 (DERVQRLAKLQEQLKAVHQQLQVLSQVPFRKLNKKKEKSKKEKKKEKVNNSNEN) are a coiled coil. Basic residues predominate over residues 447-462 (KLNKKKEKSKKEKKKE). Over residues 470–481 (NPRKMCEQMRLK) the composition is skewed to basic and acidic residues. Over residues 482–494 (EKSKRNQPKKRKQ) the composition is skewed to basic residues. In terms of domain architecture, NET spans 500–582 (KSEDEDNAKP…ACLRKRPLKP (83 aa)). Low complexity predominate over residues 631-668 (VGSVSRLSESSSSSSSSSESESSSSDLSSSDSSGSESE). Basic and acidic residues-rich tracts occupy residues 674–690 (TEVK…VKKM) and 849–865 (HLEQ…ENQR).

Belongs to the BET family. Interacts with SMARCE1. Interacts with mRNA splicing machinery proteins SRSF2, DDX5, HNRNPK and TARDBP. Interacts with the acetylated N-terminus of histone H1, H2, H3 and H4. Interacts with P-TEFb components CDK9 and CCNT1/cyclin-T1. In terms of processing, ubiquitinated in a SPOP-dependent manner, leading to proteasomal degradation.

The protein localises to the nucleus. Functionally, testis-specific chromatin protein that specifically binds histone H4 acetylated at 'Lys-5' and 'Lys-8' (H4K5ac and H4K8ac, respectively) and plays a key role in spermatogenesis. Required in late pachytene spermatocytes: plays a role in meiotic and post-meiotic cells by binding to acetylated histones at the promoter of specific meiotic and post-meiotic genes, facilitating their activation at the appropriate time. In the post-meiotic phase of spermatogenesis, binds to hyperacetylated histones and participates in their general removal from DNA. Also recognizes and binds a subset of butyrylated histones: able to bind histone H4 butyrylated at 'Lys-8' (H4K8ac), while it is not able to bind H4 butyrylated at 'Lys-5' (H4K5ac). Also acts as a component of the splicing machinery in pachytene spermatocytes and round spermatids and participates in 3'-UTR truncation of specific mRNAs in post-meiotic spermatids. Required for chromocenter organization, a structure comprised of peri-centromeric heterochromatin. The polypeptide is Bromodomain testis-specific protein (BRDT) (Macaca fascicularis (Crab-eating macaque)).